A 677-amino-acid polypeptide reads, in one-letter code: Membrane-associated tyrosine- and threonine-specific cdc2-inhibitory kinase wee-1.3 (677 aa).

The span at 1–22 (MDDTEGNSSMDSIRNGQSSPLP) shows a compositional bias: polar residues. Residues 1 to 30 (MDDTEGNSSMDSIRNGQSSPLPQVTPRLPQ) form a disordered region. One can recognise a Protein kinase domain in the interval 108–355 (FQIDEIIGRG…SRDLLDHPVI (248 aa)). ATP-binding positions include 114 to 122 (IGRGSFGEV) and Lys137. The active-site Proton acceptor is Asp228. Mg(2+) is bound by residues Asn233 and Asp246. 2 disordered regions span residues 478–526 (FDND…GTPR) and 632–677 (EPSN…GDEV). Positions 489–499 (ATCSSSNSSAI) are enriched in polar residues. A compositionally biased stretch (basic and acidic residues) spans 638-652 (TVDHHTILEQSESPR).

It belongs to the protein kinase superfamily. Ser/Thr protein kinase family. WEE1 subfamily.

The protein resides in the golgi apparatus membrane. It localises to the cytoplasm. The catalysed reaction is L-seryl-[protein] + ATP = O-phospho-L-seryl-[protein] + ADP + H(+). The enzyme catalyses L-threonyl-[protein] + ATP = O-phospho-L-threonyl-[protein] + ADP + H(+). In terms of biological role, acts as a negative regulator of entry into mitosis (G2 to M transition) by phosphorylation of the CDK1 kinase during oocyte maturation. Required for oocyte maturation, embryonic development, germline proliferation and initiation of meiosis during spermatogenesis. Required for chromosome structure during mitosis and negative regulation of nuclear envelope breakdown. This chain is Membrane-associated tyrosine- and threonine-specific cdc2-inhibitory kinase wee-1.3 (wee-1.3), found in Caenorhabditis elegans.